The following is a 704-amino-acid chain: Elongation factor G (704 aa).

Residues 8 to 290 (ARYRNIGISA…AVIDYLPSPV (283 aa)) form the tr-type G domain. Residues 17–24 (AHIDAGKT), 88–92 (DTPGH), and 142–145 (NKMD) contribute to the GTP site.

Belongs to the TRAFAC class translation factor GTPase superfamily. Classic translation factor GTPase family. EF-G/EF-2 subfamily.

It localises to the cytoplasm. Catalyzes the GTP-dependent ribosomal translocation step during translation elongation. During this step, the ribosome changes from the pre-translocational (PRE) to the post-translocational (POST) state as the newly formed A-site-bound peptidyl-tRNA and P-site-bound deacylated tRNA move to the P and E sites, respectively. Catalyzes the coordinated movement of the two tRNA molecules, the mRNA and conformational changes in the ribosome. This chain is Elongation factor G, found in Salmonella arizonae (strain ATCC BAA-731 / CDC346-86 / RSK2980).